The sequence spans 49 residues: Small ribosomal subunit protein uS19c (49 aa).

Belongs to the universal ribosomal protein uS19 family.

It is found in the plastid. The protein resides in the chloroplast. Protein S19 forms a complex with S13 that binds strongly to the 16S ribosomal RNA. The sequence is that of Small ribosomal subunit protein uS19c (rps19) from Sinapis alba (White mustard).